The following is a 369-amino-acid chain: Type 2 DNA topoisomerase 6 subunit A (369 aa).

The 137-residue stretch at 10–146 (KPREIAKQKI…LGFIPEEDGS (137 aa)) folds into the Topo IIA-type catalytic domain. Tyr103 acts as the O-(5'-phospho-DNA)-tyrosine intermediate in catalysis. Mg(2+) contacts are provided by Glu197 and Asp249.

It belongs to the TOP6A family. As to quaternary structure, homodimer. Heterotetramer of two Top6A and two Top6B chains. Mg(2+) serves as cofactor.

It catalyses the reaction ATP-dependent breakage, passage and rejoining of double-stranded DNA.. Its function is as follows. Relaxes both positive and negative superturns and exhibits a strong decatenase activity. This Methanocaldococcus jannaschii (strain ATCC 43067 / DSM 2661 / JAL-1 / JCM 10045 / NBRC 100440) (Methanococcus jannaschii) protein is Type 2 DNA topoisomerase 6 subunit A.